The primary structure comprises 216 residues: Uracil phosphoribosyltransferase (216 aa).

5-phospho-alpha-D-ribose 1-diphosphate is bound by residues R85, R110, and 135–143 (DPMVATGYS). Residues I200 and 205–207 (GDA) each bind uracil. D206 is a binding site for 5-phospho-alpha-D-ribose 1-diphosphate.

It belongs to the UPRTase family. Requires Mg(2+) as cofactor.

It carries out the reaction UMP + diphosphate = 5-phospho-alpha-D-ribose 1-diphosphate + uracil. It participates in pyrimidine metabolism; UMP biosynthesis via salvage pathway; UMP from uracil: step 1/1. Allosterically activated by GTP. Functionally, catalyzes the conversion of uracil and 5-phospho-alpha-D-ribose 1-diphosphate (PRPP) to UMP and diphosphate. The chain is Uracil phosphoribosyltransferase from Paraburkholderia xenovorans (strain LB400).